The chain runs to 221 residues: Ribonuclease HII (221 aa).

An RNase H type-2 domain is found at 29-220; sequence RRVAGVDEVG…LRDLQAGEIG (192 aa). A divalent metal cation is bound by residues aspartate 35, glutamate 36, and aspartate 129. The disordered stretch occupies residues 198-221; sequence LGPSPQHRRSFAPLRDLQAGEIGG.

It belongs to the RNase HII family. Requires Mn(2+) as cofactor. The cofactor is Mg(2+).

Its subcellular location is the cytoplasm. The enzyme catalyses Endonucleolytic cleavage to 5'-phosphomonoester.. Functionally, endonuclease that specifically degrades the RNA of RNA-DNA hybrids. In Synechococcus sp. (strain JA-3-3Ab) (Cyanobacteria bacterium Yellowstone A-Prime), this protein is Ribonuclease HII.